Here is a 446-residue protein sequence, read N- to C-terminus: 3-phosphoshikimate 1-carboxyvinyltransferase (446 aa).

Residues K26, S27, and R31 each contribute to the 3-phosphoshikimate site. Residue K26 participates in phosphoenolpyruvate binding. Phosphoenolpyruvate is bound by residues G100 and R128. 3-phosphoshikimate contacts are provided by S171, S172, Q173, S200, E315, and H344. Q173 contributes to the phosphoenolpyruvate binding site. The active-site Proton acceptor is E315. Residues R348, R389, and K414 each coordinate phosphoenolpyruvate.

Belongs to the EPSP synthase family. In terms of assembly, monomer.

Its subcellular location is the cytoplasm. The enzyme catalyses 3-phosphoshikimate + phosphoenolpyruvate = 5-O-(1-carboxyvinyl)-3-phosphoshikimate + phosphate. It participates in metabolic intermediate biosynthesis; chorismate biosynthesis; chorismate from D-erythrose 4-phosphate and phosphoenolpyruvate: step 6/7. Catalyzes the transfer of the enolpyruvyl moiety of phosphoenolpyruvate (PEP) to the 5-hydroxyl of shikimate-3-phosphate (S3P) to produce enolpyruvyl shikimate-3-phosphate and inorganic phosphate. This Mycolicibacterium gilvum (strain PYR-GCK) (Mycobacterium gilvum (strain PYR-GCK)) protein is 3-phosphoshikimate 1-carboxyvinyltransferase.